The primary structure comprises 377 residues: Nitric oxide reductase FlRd-NAD(+) reductase (377 aa).

This sequence belongs to the FAD-dependent oxidoreductase family. The cofactor is FAD.

Its subcellular location is the cytoplasm. It catalyses the reaction 2 reduced [nitric oxide reductase rubredoxin domain] + NAD(+) + H(+) = 2 oxidized [nitric oxide reductase rubredoxin domain] + NADH. It functions in the pathway nitrogen metabolism; nitric oxide reduction. Functionally, one of at least two accessory proteins for anaerobic nitric oxide (NO) reductase. Reduces the rubredoxin moiety of NO reductase. This Enterobacter sp. (strain 638) protein is Nitric oxide reductase FlRd-NAD(+) reductase.